The following is a 227-amino-acid chain: uncharacterized protein (227 aa).

A signal peptide spans 1–21; the sequence is MELKKIAVGLTALLGMSVANA.

This is an uncharacterized protein from Haemophilus influenzae (strain ATCC 51907 / DSM 11121 / KW20 / Rd).